Reading from the N-terminus, the 259-residue chain is 14-3-3-like protein (259 aa).

The interval D237–Q259 is disordered. Over residues R247–Q259 the composition is skewed to basic and acidic residues.

The protein belongs to the 14-3-3 family. In terms of tissue distribution, leaves specific.

In Solanum tuberosum (Potato), this protein is 14-3-3-like protein.